The primary structure comprises 277 residues: Myelin proteolipid protein (277 aa).

At 1–10 (MGLLECCARC) the chain is on the cytoplasmic side. 3 S-palmitoyl cysteine lipidation sites follow: cysteine 6, cysteine 7, and cysteine 10. The chain crosses the membrane as a helical span at residues 11–36 (LVGAPFASLVATGLCFFGVALFCGCG). Over 37–59 (HEALTGTEKLIETYFSKNYQDYE) the chain is Extracellular. Residues 60 to 88 (YLINVIHAFQYVIYGTASFFFLYGALLLA) form a helical membrane-spanning segment. The Cytoplasmic segment spans residues 89-151 (EGFYTTGAVR…LGKWLGHPDK (63 aa)). Cysteine 109 is lipidated: S-palmitoyl cysteine. Residue serine 114 is modified to Phosphoserine. A phosphothreonine mark is found at threonine 116 and threonine 118. 2 S-palmitoyl cysteine lipidation sites follow: cysteine 139 and cysteine 141. A helical membrane pass occupies residues 152–178 (FVGITYALTIVWLLVFACSAVPVYIYF). Over 179–238 (NTWTTCQSIAFPSKTSASIGSLCADARMYGVLPWNAFPGKVCGSNLLSICKTAEFQMTFH) the chain is Extracellular. 2 disulfide bridges follow: cysteine 184-cysteine 228 and cysteine 201-cysteine 220. Serine 199 carries the O-palmitoyl serine lipid modification. The chain crosses the membrane as a helical span at residues 239 to 268 (LFIAAFVGAAATLVSLLTFMIAATYNFAVL). The Cytoplasmic segment spans residues 269-277 (KLMGRGTKF).

It belongs to the myelin proteolipid protein family.

The protein resides in the cell membrane. The protein localises to the myelin membrane. Functionally, this is the major myelin protein from the central nervous system. It plays an important role in the formation or maintenance of the multilamellar structure of myelin. The protein is Myelin proteolipid protein (PLP1) of Canis lupus familiaris (Dog).